Consider the following 607-residue polypeptide: MSQPFDASAFLATCSGRPGVYRMFDAEARLLYVGKAKNLKKRLASYFRKTGLAPKTAALVGRIAQVETTITANETEALLLEQTLIKEWRPPYNILLRDDKSYPYVFLSDGEFPRLGIHRGAKKAKGRYFGPYPSAGAIRESLSLLQKAFSVRQCEDSYYANRTRPCLQYQIKRCKGPCVGLVTPEEYAEDVRHSVMFLEGRSQQLGNELNAEMEKAAMALNFEKAAELRDQIALLRRVQDQQYMEGGSGDVDVVAAFVNPGGACVHLISVRGGRVLGSKNFFPQVGIEEEVAEVMAAFLSQYYLGNAERELPGELIVNVVHEDFDAITEAVQTLRGRELSISHRVRGTRARWQQLAVTNAEQALNARLANRQHMAARFEALAQVLDLDEVPQRLECYDISHSSGEATVASCVVFGPEGPLKSDYRRFNIEGVTAGDDYAAMHQALQRRYGRIKDGEGKLPDVLLVDGGKGQLNMARDVMQELGFGDLTLLGVAKGVTRKAGFETLYLNDVAHEFTLKGDSPALHLIQQIRDEAHRFAITGHRARRGKARRTSSLEDVAGVGPKRRRDLLKHFGGLQELNRASIDEIAKAPGISKKLAESIYASLHSE.

A GIY-YIG domain is found at 16–94 (GRPGVYRMFD…IKEWRPPYNI (79 aa)). Residues 203 to 238 (QQLGNELNAEMEKAAMALNFEKAAELRDQIALLRRV) form the UVR domain.

It belongs to the UvrC family. As to quaternary structure, interacts with UvrB in an incision complex.

Its subcellular location is the cytoplasm. The UvrABC repair system catalyzes the recognition and processing of DNA lesions. UvrC both incises the 5' and 3' sides of the lesion. The N-terminal half is responsible for the 3' incision and the C-terminal half is responsible for the 5' incision. This Pseudomonas entomophila (strain L48) protein is UvrABC system protein C.